The chain runs to 273 residues: Formamidopyrimidine-DNA glycosylase (273 aa).

Pro-2 acts as the Schiff-base intermediate with DNA in catalysis. Glu-3 (proton donor) is an active-site residue. The Proton donor; for beta-elimination activity role is filled by Lys-58. Residues His-91, Arg-109, and Arg-154 each coordinate DNA. The FPG-type zinc-finger motif lies at 239 to 273; the sequence is FVYARTGEPCRICNAPVRQIVQGQRSTFYCPNCQK. Arg-263 acts as the Proton donor; for delta-elimination activity in catalysis.

It belongs to the FPG family. Monomer. The cofactor is Zn(2+).

The catalysed reaction is Hydrolysis of DNA containing ring-opened 7-methylguanine residues, releasing 2,6-diamino-4-hydroxy-5-(N-methyl)formamidopyrimidine.. The enzyme catalyses 2'-deoxyribonucleotide-(2'-deoxyribose 5'-phosphate)-2'-deoxyribonucleotide-DNA = a 3'-end 2'-deoxyribonucleotide-(2,3-dehydro-2,3-deoxyribose 5'-phosphate)-DNA + a 5'-end 5'-phospho-2'-deoxyribonucleoside-DNA + H(+). Involved in base excision repair of DNA damaged by oxidation or by mutagenic agents. Acts as a DNA glycosylase that recognizes and removes damaged bases. Has a preference for oxidized purines, such as 7,8-dihydro-8-oxoguanine (8-oxoG). Has AP (apurinic/apyrimidinic) lyase activity and introduces nicks in the DNA strand. Cleaves the DNA backbone by beta-delta elimination to generate a single-strand break at the site of the removed base with both 3'- and 5'-phosphates. The protein is Formamidopyrimidine-DNA glycosylase of Herminiimonas arsenicoxydans.